The chain runs to 122 residues: MGKISSLPTQLFKCCFCDFLKVKMHIMSSSHLFYLALCLLTFTSSATAGPETLCGAELVDALQFVCGDRGFYFNKPTGYGSSSRRAPQTGIVDECCFRSCDLRRLEMYCAPLKPAKSARSVR.

The interval 49 to 77 (GPETLCGAELVDALQFVCGDRGFYFNKPT) is b. Cystine bridges form between C54/C96, C66/C109, and C95/C100. The interval 78-89 (GYGSSSRRAPQT) is c. An a region spans residues 90–110 (GIVDECCFRSCDLRRLEMYCA). The d stretch occupies residues 111-118 (PLKPAKSA). A propeptide spans 119-122 (RSVR) (e peptide).

The protein belongs to the insulin family. Forms a ternary complex with IGFR1 and ITGAV:ITGB3. Forms a ternary complex with IGFR1 and ITGA6:ITGB4. Forms a ternary complex with IGFBP3 and ALS.

Its subcellular location is the secreted. Its function is as follows. The insulin-like growth factors, isolated from plasma, are structurally and functionally related to insulin but have a much higher growth-promoting activity. May be a physiological regulator of [1-14C]-2-deoxy-D-glucose (2DG) transport and glycogen synthesis in osteoblasts. Stimulates glucose transport in bone-derived osteoblastic (PyMS) cells and is effective at much lower concentrations than insulin, not only regarding glycogen and DNA synthesis but also with regard to enhancing glucose uptake. May play a role in synapse maturation. Ca(2+)-dependent exocytosis of IGF1 is required for sensory perception of smell in the olfactory bulb. Acts as a ligand for IGF1R. Binds to the alpha subunit of IGF1R, leading to the activation of the intrinsic tyrosine kinase activity which autophosphorylates tyrosine residues in the beta subunit thus initiating a cascade of down-stream signaling events leading to activation of the PI3K-AKT/PKB and the Ras-MAPK pathways. Binds to integrins ITGAV:ITGB3 and ITGA6:ITGB4. Its binding to integrins and subsequent ternary complex formation with integrins and IGFR1 are essential for IGF1 signaling. Induces the phosphorylation and activation of IGFR1, MAPK3/ERK1, MAPK1/ERK2 and AKT1. As part of the MAPK/ERK signaling pathway, acts as a negative regulator of apoptosis in cardiomyocytes via promotion of STUB1/CHIP-mediated ubiquitination and degradation of ICER-type isoforms of CREM. In Equus caballus (Horse), this protein is Insulin-like growth factor 1.